The following is a 75-amino-acid chain: MKKDIHPDYHMITVKMTDGTEYQTRSTWGSEGDVMTLEIDPTAHPAWTGGQGRMLDSGGQVAKFNKRFGGLTLKR.

Belongs to the bacterial ribosomal protein bL31 family. Type A subfamily. Part of the 50S ribosomal subunit.

In terms of biological role, binds the 23S rRNA. This is Large ribosomal subunit protein bL31 from Sphingopyxis alaskensis (strain DSM 13593 / LMG 18877 / RB2256) (Sphingomonas alaskensis).